Consider the following 275-residue polypeptide: ATP synthase subunit a (275 aa).

The next 7 membrane-spanning stretches (helical) occupy residues 46–66 (RLML…VIAM), 104–124 (FLPV…ASII), 135–155 (IGMP…VGIK), 166–186 (SIVV…IEFI), 204–224 (MLAG…FFFV), 231–251 (IFGV…LLVI), and 252–272 (FLQA…ALHA).

It belongs to the ATPase A chain family. In terms of assembly, F-type ATPases have 2 components, CF(1) - the catalytic core - and CF(0) - the membrane proton channel. CF(1) has five subunits: alpha(3), beta(3), gamma(1), delta(1), epsilon(1). CF(0) has three main subunits: a(1), b(2) and c(9-12). The alpha and beta chains form an alternating ring which encloses part of the gamma chain. CF(1) is attached to CF(0) by a central stalk formed by the gamma and epsilon chains, while a peripheral stalk is formed by the delta and b chains.

The protein resides in the cell membrane. Functionally, key component of the proton channel; it plays a direct role in the translocation of protons across the membrane. This is ATP synthase subunit a from Rhodococcus erythropolis (strain PR4 / NBRC 100887).